A 594-amino-acid chain; its full sequence is (-)-endo-fenchol synthase, chloroplastic (594 aa).

Residues 1-50 (MSSLVMHVGIVNKPAITYLPTLSRRASNLHNVSSTRLQTSCSLQLDYKPV) constitute a chloroplast transit peptide. Residues aspartate 348, aspartate 352, aspartate 492, and glutamate 500 each coordinate Mg(2+). A DDXXD motif motif is present at residues 348–352 (DDIYD).

Belongs to the terpene synthase family. Tpsa subfamily. Mg(2+) is required as a cofactor. The cofactor is Mn(2+). In terms of tissue distribution, expressed at low levels in leaves.

It localises to the plastid. The protein resides in the chloroplast. It carries out the reaction (2E)-geranyl diphosphate = alpha-pinene + diphosphate. It catalyses the reaction (2E)-geranyl diphosphate + H2O = (1S,2S,4R)-endo-fenchol + diphosphate. The enzyme catalyses (2E)-geranyl diphosphate = limonene + diphosphate. The protein operates within secondary metabolite biosynthesis; terpenoid biosynthesis. Its function is as follows. Monoterpene synthase involved in the biosynthesis of volatile compounds widely used in aromatherapy and folk medicine, and present in culinary herbs. Mediates the conversion of (2E)-geranyl diphosphate (GPP) into alpha fenchol, limonene and alpha-pinene and, as minor compounds, into beta-myrcene, alpha-terpinolene and alpha-phellandrene. This chain is (-)-endo-fenchol synthase, chloroplastic, found in Lavandula stoechas (Butterfly lavender).